Here is an 898-residue protein sequence, read N- to C-terminus: Sodium/hydrogen exchanger 5 (898 aa).

The Cytoplasmic segment spans residues 1-3 (MLR). The helical transmembrane segment at 4-24 (VALLLLPGLPLAGVGATEEPT) threads the bilayer. The Extracellular segment spans residues 25-47 (QEPGPLGEPPGLALFRWQWHEVE). A helical transmembrane segment spans residues 48–68 (APYLVALWILVASLAKIVFHL). Residues 69-75 (SRKVTSL) lie on the Cytoplasmic side of the membrane. The chain crosses the membrane as a helical span at residues 76 to 96 (VPESCLLILLGLALGGIVLAV). Topologically, residues 97–136 (AKKAEYQLEPGTFFLFLLPPIVLDSGYFMPSRLFFDNLGA) are extracellular. Residues 137–157 (ILTYAVVGTLWNAFTTGVALW) form a helical membrane-spanning segment. At 158–175 (GLQQAGLVAPRVQAGLLD) the chain is on the cytoplasmic side. The helical transmembrane segment at 176–196 (FLLFGSLISAVDPVAVLAVFE) threads the bilayer. At 197–202 (EVHVNE) the chain is on the extracellular side. N-linked (GlcNAc...) asparagine glycosylation occurs at Asn-201. Residues 203–223 (TLFIIVFGESLLNDAVTVVLY) traverse the membrane as a helical segment. Residues 224 to 248 (KVCNSFVEMGSANVQATDYLKGVAS) lie on the Cytoplasmic side of the membrane. A helical membrane pass occupies residues 249–269 (LFVVSLGGAAVGLVFAFLLAL). The Extracellular portion of the chain corresponds to 270-278 (TTRFTKRVR). The helical transmembrane segment at 279 to 299 (IIEPLLVFLLAYAAYLTAEMA) threads the bilayer. Residues 300–333 (SLSAILAVTMCGLGCKKYVEANISHKSRTAVKYT) are Cytoplasmic-facing. A helical membrane pass occupies residues 334 to 354 (MKTLASSAETVIFMLLGISAV). At 355 to 362 (DSSKWAWD) the chain is on the extracellular side. Residues 363–383 (SGLVLGTLFFILFFRALGVVL) traverse the membrane as a helical segment. Residues 384 to 400 (QTWVLNQFRLVPLDKID) are Cytoplasmic-facing. Residues 401–421 (QVVMSYGGLRGAVAFALVILL) traverse the membrane as a helical segment. Topologically, residues 422 to 430 (DRTKVPAKD) are extracellular. The chain crosses the membrane as a helical span at residues 431-451 (YFVATTIVVVFFTVIVQGLTI). Topologically, residues 452–898 (KPLVKWLRVK…CIQFNRGGRL (447 aa)) are cytoplasmic. 2 disordered regions span residues 660-692 (TKSK…RDLG) and 801-888 (ESLA…NSHW). Residues 662-674 (SKPRPRKTGHKKK) are compositionally biased toward basic residues. Residues 856–867 (ESSADIPQQQEL) show a composition bias toward polar residues.

The protein belongs to the monovalent cation:proton antiporter 1 (CPA1) transporter (TC 2.A.36) family. As to quaternary structure, interacts with CHP1 and CHP2. Interacts with ARRB2; facilitates the endocytosis of SLC9A5 from the plasma membrane. Interacts with RACK1; this interaction positively regulates SLC9A5 activity and promotes SLC9A5 localization to focal adhesions. Interacts with SCAMP2; this interaction regulates SLC9A5 cell-surface targeting and SLC9A5 activity. Post-translationally, phosphorylated by PRKAA2; promotes its accumulation at the cell surface. Phosphorylated by CSNK2A1 in a manner favoring its beta-arrestin binding and endocytosis. In terms of tissue distribution, highly expressed in brain. Strongly expressed in the dentate gyrus.

It localises to the cell membrane. It is found in the recycling endosome membrane. The protein resides in the cell projection. Its subcellular location is the dendritic spine membrane. The protein localises to the synaptic cell membrane. It localises to the cell junction. It is found in the focal adhesion. It carries out the reaction Na(+)(in) + H(+)(out) = Na(+)(out) + H(+)(in). Functionally, plasma membrane Na(+)/H(+) antiporter. Mediates the electroneutral exchange of intracellular H(+) ions for extracellular Na(+) in 1:1 stoichiometry. Responsible for regulating intracellular pH homeostasis, in particular in neural tissues. Acts as a negative regulator of dendritic spine growth. Plays a role in postsynaptic remodeling and signaling. Can also contribute to organellar pH regulation, with consequences for receptor tyrosine kinase trafficking. This Rattus norvegicus (Rat) protein is Sodium/hydrogen exchanger 5 (Slc9a5).